Consider the following 150-residue polypeptide: 3-hydroxyacyl-[acyl-carrier-protein] dehydratase FabZ (150 aa).

His-54 is an active-site residue.

This sequence belongs to the thioester dehydratase family. FabZ subfamily.

It is found in the cytoplasm. It carries out the reaction a (3R)-hydroxyacyl-[ACP] = a (2E)-enoyl-[ACP] + H2O. Involved in unsaturated fatty acids biosynthesis. Catalyzes the dehydration of short chain beta-hydroxyacyl-ACPs and long chain saturated and unsaturated beta-hydroxyacyl-ACPs. This Chromobacterium violaceum (strain ATCC 12472 / DSM 30191 / JCM 1249 / CCUG 213 / NBRC 12614 / NCIMB 9131 / NCTC 9757 / MK) protein is 3-hydroxyacyl-[acyl-carrier-protein] dehydratase FabZ.